The chain runs to 1321 residues: Insulin receptor substrate 2 (1321 aa).

Over residues 1-10 (MASAPLPGPP) the composition is skewed to pro residues. Disordered stretches follow at residues 1 to 32 (MASAPLPGPPASAGGDGPNLNNNNNNNNHSVR) and 51 to 73 (RGPGTGGDEASAAGGSPPQPPRL). One can recognise a PH domain in the interval 16–144 (DGPNLNNNNN…WYRALTDLVS (129 aa)). Positions 18 to 28 (PNLNNNNNNNN) are enriched in low complexity. Positions 191-295 (YREVWQVNLK…EAMKALKELF (105 aa)) constitute an IRS-type PTB domain. A disordered region spans residues 299–536 (PRSKSQSSGS…ARDGSGGELY (238 aa)). Residues S303 and S343 each carry the phosphoserine modification. Phosphothreonine is present on T347. At S362 the chain carries Phosphoserine. Gly residues predominate over residues 364 to 376 (GDGGAAGGAGTAG). Phosphoserine occurs at positions 381, 385, and 388. Position 409 is an omega-N-methylarginine (R409). Low complexity-rich tracts occupy residues 435-456 (SPPAATSPGSLSSSSGHGSGSY) and 478-490 (PSSGSASASGSPS). Position 517 is a phosphothreonine (T517). At S520 the chain carries Phosphoserine. T524 carries the phosphothreonine modification. Y536 is modified (phosphotyrosine; by INSR). The short motif at 536–539 (YGYM) is the YXXM motif 1 element. S556 carries the phosphoserine; by PLK1 modification. S573 bears the Phosphoserine mark. Residues T575 and T576 each carry the phosphothreonine modification. S590 carries the post-translational modification Phosphoserine. Positions 594–597 (YTLM) match the YXXM motif 2 motif. Phosphoserine is present on residues S604 and S616. Y649 bears the Phosphotyrosine mark. 2 consecutive short sequence motifs (YXXM motif) follow at residues 649–652 (YMPM) and 671–674 (YMPM). Position 671 is a phosphotyrosine; by INSR (Y671). Phosphoserine is present on residues S675, S678, S727, and S728. A YXXM motif 5 motif is present at residues 734 to 737 (YMRM). The residue at position 762 (S762) is a Phosphoserine. T771 carries the post-translational modification Phosphothreonine. S796 is modified (phosphoserine). The short motif at 814–817 (YVLM) is the YXXM motif 6 element. S819 is subject to Phosphoserine. Disordered regions lie at residues 834 to 871 (ATPGAGTFGAAGGSHTQPHHSAVPSSMRPSAIGGRPEG) and 888 to 1091 (EGLQ…ASPT). Position 907 is a phosphoserine (S907). Y911 is subject to Phosphotyrosine; by INSR. Low complexity predominate over residues 930-959 (LLASAASSSSLLSASSPASSLGSGTPGTSS). S965 is modified (phosphoserine). The residue at position 970 (Y970) is a Phosphotyrosine; by INSR. Residues 1005 to 1014 (PYPPLPPRPS) are compositionally biased toward pro residues. Residues 1039 to 1055 (AATSQGPTAGSSMSSEP) are compositionally biased toward polar residues. Positions 1061-1064 (YTEM) match the YXXM motif 7 motif. T1071 is modified (phosphothreonine). Residues 1072–1082 (PPQPIVAPPKP) are compositionally biased toward pro residues. S1089 is modified (phosphoserine). A Phosphoserine; by PLK1 modification is found at S1098. The interval 1110–1198 (LQVSQPPDPH…TSPGQAQPLV (89 aa)) is disordered. The segment covering 1139-1154 (ETFSSTTTVTPVSPSF) has biased composition (low complexity). T1148 is subject to Phosphothreonine. Phosphoserine occurs at positions 1151, 1163, 1165, 1175, and 1190. Over residues 1163-1179 (SASVENVSLRKSSEGSS) the composition is skewed to polar residues. Y1242 is modified (phosphotyrosine; by INSR). The interval 1251–1275 (QGSLAQSQPQPGDKNSWSRTRSLGG) is disordered. Residues 1253–1271 (SLAQSQPQPGDKNSWSRTR) show a composition bias toward polar residues. A Phosphotyrosine; by INSR modification is found at Y1303. K1314 participates in a covalent cross-link: Glycyl lysine isopeptide (Lys-Gly) (interchain with G-Cter in ubiquitin).

As to quaternary structure, interacts with PHIP. Interacts with SH2B1; this interaction enhances leptin-induced activation of the PI3-kinase pathway. Interacts with GRB2. Interacts with PIK3R1. Interacts with DVL2; this interaction promotes the Wnt/beta-catenin signaling pathway. In terms of processing, phosphorylation fluctuates in a cell-cycle dependent manner with hyperphosphorylation during mitosis. Phosphorylated at Ser-556 and Ser-1098 by PLK1; these phosphorylations prevent the activation of the PI3K pathway upon growth factor stimulation by inhibiting the binding between IRS2 and the PI3K pathway components and increasing the level of IRS2 protein degradation. In addition, they prevent premature mitotic exit. Post-translationally, monoubiquitinated by NEDD4; leading to enhanced IGF1 signaling. During cell cycle, ubiquitination and proteasomal degradation are controlled by FZR1. In terms of tissue distribution, skeletal muscle, lung, brain, liver, kidney, heart and spleen.

The protein resides in the cytoplasm. Its subcellular location is the cytosol. Signaling adapter protein that participates in the signal transduction from two prominent receptor tyrosine kinases, insulin receptor/INSR and insulin-like growth factor I receptor/IGF1R. Plays therefore an important role in development, growth, glucose homeostasis as well as lipid metabolism. Upon phosphorylation by the insulin receptor, functions as a signaling scaffold that propagates insulin action through binding to SH2 domain-containing proteins including the p85 regulatory subunit of PI3K, NCK1, NCK2, GRB2 or SHP2. Recruitment of GRB2 leads to the activation of the guanine nucleotide exchange factor SOS1 which in turn triggers the Ras/Raf/MEK/MAPK signaling cascade. Activation of the PI3K/AKT pathway is responsible for most of insulin metabolic effects in the cell, and the Ras/Raf/MEK/MAPK is involved in the regulation of gene expression and in cooperation with the PI3K pathway regulates cell growth and differentiation. Acts a positive regulator of the Wnt/beta-catenin signaling pathway through suppression of DVL2 autophagy-mediated degradation leading to cell proliferation. Plays a role in cell cycle progression by promoting a robust spindle assembly checkpoint (SAC) during M-phase. In macrophages, IL4-induced tyrosine phosphorylation of IRS2 leads to the recruitment and activation of phosphoinositide 3-kinase (PI3K). This chain is Insulin receptor substrate 2 (Irs2), found in Mus musculus (Mouse).